We begin with the raw amino-acid sequence, 168 residues long: Shikimate kinase (168 aa).

Residue 10 to 15 (CSGKST) participates in ATP binding. Residue S14 participates in Mg(2+) binding. Residues D32, R56, and G78 each contribute to the substrate site. R116 contributes to the ATP binding site. Residue R133 participates in substrate binding.

The protein belongs to the shikimate kinase family. As to quaternary structure, monomer. It depends on Mg(2+) as a cofactor.

The protein resides in the cytoplasm. The catalysed reaction is shikimate + ATP = 3-phosphoshikimate + ADP + H(+). Its pathway is metabolic intermediate biosynthesis; chorismate biosynthesis; chorismate from D-erythrose 4-phosphate and phosphoenolpyruvate: step 5/7. Catalyzes the specific phosphorylation of the 3-hydroxyl group of shikimic acid using ATP as a cosubstrate. This chain is Shikimate kinase, found in Aquifex aeolicus (strain VF5).